A 465-amino-acid chain; its full sequence is Ribulose bisphosphate carboxylase large chain (465 aa).

Lys4 bears the N6,N6,N6-trimethyllysine mark. Substrate-binding residues include Asn113 and Thr163. Catalysis depends on Lys165, which acts as the Proton acceptor. Lys167 contributes to the substrate binding site. Mg(2+) is bound by residues Lys191, Asp193, and Glu194. Lys191 carries the N6-carboxylysine modification. The Proton acceptor role is filled by His284. Substrate contacts are provided by Arg285, His317, and Ser369.

The protein belongs to the RuBisCO large chain family. Type I subfamily. In terms of assembly, heterohexadecamer of 8 large chains and 8 small chains; disulfide-linked. The disulfide link is formed within the large subunit homodimers. Mg(2+) serves as cofactor. In terms of processing, the disulfide bond which can form in the large chain dimeric partners within the hexadecamer appears to be associated with oxidative stress and protein turnover.

Its subcellular location is the plastid. The protein localises to the chloroplast. It catalyses the reaction 2 (2R)-3-phosphoglycerate + 2 H(+) = D-ribulose 1,5-bisphosphate + CO2 + H2O. The enzyme catalyses D-ribulose 1,5-bisphosphate + O2 = 2-phosphoglycolate + (2R)-3-phosphoglycerate + 2 H(+). In terms of biological role, ruBisCO catalyzes two reactions: the carboxylation of D-ribulose 1,5-bisphosphate, the primary event in carbon dioxide fixation, as well as the oxidative fragmentation of the pentose substrate in the photorespiration process. Both reactions occur simultaneously and in competition at the same active site. This chain is Ribulose bisphosphate carboxylase large chain, found in Byrsonima crassifolia (Cajuil cimarron).